Here is a 458-residue protein sequence, read N- to C-terminus: Zinc finger protein 239 (458 aa).

Lys-108 is covalently cross-linked (Glycyl lysine isopeptide (Lys-Gly) (interchain with G-Cter in SUMO2)). The residue at position 191 (Ser-191) is a Phosphoserine. 9 C2H2-type zinc fingers span residues 207-229 (YECSQCGKNFSQSSELLLHQRDH), 235-257 (YKCEQCGKGFTRSSSLLIHQAVH), 263-285 (YKCDKCGKGFTRSSSLLIHHAVH), 291-313 (YKCDKCGKGFSQSSKLHIHQRVH), 319-341 (YECEECGMSFSQRSNLHIHQRVH), 347-369 (YKCGECGKGFSQSSNLHIHRCIH), 375-397 (YQCYECGKGFSQSPDLRIHLRVH), 403-425 (YHCGKCGKGFSQSSKLLIHQRVH), and 431-453 (YECSKCGKGFSQSSNLHIHQRVH).

The protein belongs to the krueppel C2H2-type zinc-finger protein family.

It is found in the nucleus. Functionally, may be involved in transcriptional regulation. The protein is Zinc finger protein 239 (ZNF239) of Pongo abelii (Sumatran orangutan).